The primary structure comprises 339 residues: Cyclin-D1-1 (339 aa).

It belongs to the cyclin family. Cyclin D subfamily. As to quaternary structure, interacts with CDKA-1 and KRP6/ICK4. Expressed in roots, leaves and flowers.

May activate cell cycle in the root apical meristem (RAM) and promote embryonic root (radicle) protrusion. The chain is Cyclin-D1-1 (CYCD1-1) from Arabidopsis thaliana (Mouse-ear cress).